Consider the following 468-residue polypeptide: Nuclear pore complex protein Nup50 (468 aa).

The span at M1–D16 shows a compositional bias: basic and acidic residues. The disordered stretch occupies residues M1 to T26. The residue at position 2 (A2) is an N-acetylalanine. K8 bears the N6-acetyllysine mark. A Phosphoserine modification is found at S52. Repeat unit 1 spans residues F76 to G77. The 5 X 2 AA repeats of F-G stretch occupies residues F76–G304. K83 bears the N6-acetyllysine mark. Repeat unit 2 spans residues F113–G114. Disordered regions lie at residues T122 to S148 and H201 to L224. K127 is subject to N6-acetyllysine. A compositionally biased stretch (low complexity) spans S137–S148. The segment at G144–R206 is binding to CDKN1B. Phosphoserine is present on residues S208 and S221. Copy 3 of the repeat occupies F225–G226. S234 is subject to Phosphoserine. The segment at F238–A269 is disordered. Residues N241–D260 are compositionally biased toward basic and acidic residues. T246 and T259 each carry phosphothreonine. Phosphoserine is present on S270. Residues F273–G274 form repeat 4. Position 296 is a phosphoserine (S296). Copy 5 of the repeat occupies F303–G304. A compositionally biased stretch (polar residues) spans G304–F317. The disordered stretch occupies residues G304 to P345. Residues G335 to A468 form the RanBD1 domain. K353 is covalently cross-linked (Glycyl lysine isopeptide (Lys-Gly) (interchain with G-Cter in SUMO2)). K450 carries the N6-acetyllysine modification.

In terms of assembly, interacts with Importin alpha-2, Importin beta, Importin beta-2, NUP153, Ran binding protein 7, CDKN1B and itself. Does not interact with TPR. Ubiquitous. Highest levels in testis, peripheral blood leukocytes and fetal liver.

It localises to the nucleus. It is found in the nuclear pore complex. The protein resides in the nucleus membrane. In terms of biological role, component of the nuclear pore complex that has a direct role in nuclear protein import. Actively displaces NLSs from importin-alpha, and facilitates disassembly of the importin-alpha:beta-cargo complex and importin recycling. Interacts with regulatory proteins of cell cycle progression including CDKN1B. This interaction is required for correct intracellular transport and degradation of CDKN1B. This Homo sapiens (Human) protein is Nuclear pore complex protein Nup50 (NUP50).